Reading from the N-terminus, the 557-residue chain is Vacuolar protein sorting-associated protein 30 (557 aa).

Disordered regions lie at residues 93-149 (DDDN…ENQQ) and 218-238 (NKEI…SEKE). Over residues 135-147 (DEEEQEATDEDEN) the composition is skewed to acidic residues. Threonine 142 bears the Phosphothreonine mark. Residues 189-322 (LINRLKSEYD…QLDKLRKINI (134 aa)) adopt a coiled-coil conformation. Positions 320–539 (INIFNATFKI…LAFSSNLLSK (220 aa)) are BARA. The tract at residues 515 to 540 (WTTAMKFLLTNVKWLLAFSSNLLSKS) is required for membrane-association, autophagic function during starvation and normal autophagosome morphology.

This sequence belongs to the beclin family. In terms of assembly, component of the autophagy-specific VPS34 PI3-kinase complex I composed of VPS15, VPS30, VPS34, ATG14 and ATG38; and of the VPS34 PI3-kinase complex II composed of VPS15, VPS30, VPS34 and VPS38.

Its subcellular location is the endosome membrane. It localises to the vacuole membrane. The protein localises to the preautophagosomal structure membrane. In terms of biological role, required for cytoplasm to vacuole transport (Cvt), autophagy, nucleophagy, and mitophagy, as a part of the autophagy-specific VPS34 PI3-kinase complex I. This complex is essential to recruit the ATG8-phosphatidylinositol conjugate and the ATG12-ATG5 conjugate to the pre-autophagosomal structure. Also involved in endosome-to-Golgi retrograde transport as part of the VPS34 PI3-kinase complex II. This second complex is required for the endosome-to-Golgi retrieval of PEP1 and KEX2, and the recruitment of VPS5 and VPS7, two components of the retromer complex, to endosomal membranes (probably through the synthesis of a specific pool of phosphatidylinositol 3-phosphate recruiting the retromer to the endosomes). Also plays a role in regulation of filamentous growth. The chain is Vacuolar protein sorting-associated protein 30 from Saccharomyces cerevisiae (strain ATCC 204508 / S288c) (Baker's yeast).